A 509-amino-acid polypeptide reads, in one-letter code: Light-independent protochlorophyllide reductase subunit B (509 aa).

Position 36 (D36) interacts with [4Fe-4S] cluster. The active-site Proton donor is D298. Residue 433–434 participates in substrate binding; that stretch reads GM.

Belongs to the ChlB/BchB/BchZ family. As to quaternary structure, protochlorophyllide reductase is composed of three subunits; ChlL, ChlN and ChlB. Forms a heterotetramer of two ChlB and two ChlN subunits. [4Fe-4S] cluster serves as cofactor.

It is found in the plastid. It localises to the chloroplast. The enzyme catalyses chlorophyllide a + oxidized 2[4Fe-4S]-[ferredoxin] + 2 ADP + 2 phosphate = protochlorophyllide a + reduced 2[4Fe-4S]-[ferredoxin] + 2 ATP + 2 H2O. It participates in porphyrin-containing compound metabolism; chlorophyll biosynthesis (light-independent). Its function is as follows. Component of the dark-operative protochlorophyllide reductase (DPOR) that uses Mg-ATP and reduced ferredoxin to reduce ring D of protochlorophyllide (Pchlide) to form chlorophyllide a (Chlide). This reaction is light-independent. The NB-protein (ChlN-ChlB) is the catalytic component of the complex. In Ephedra altissima (High-climbing jointfir), this protein is Light-independent protochlorophyllide reductase subunit B.